Consider the following 391-residue polypeptide: Cell cycle checkpoint control protein RAD9A (391 aa).

Tyr-28 is subject to Phosphotyrosine. The interval 51-91 is possesses 3'-5' exonuclease activity; sequence FLFAPLFFQQYQAATPGQDLLRCKILMKSFLSVFRSLAMLE. Positions 266–391 are sufficient for interaction with ABL1; sequence SDTDSHSQDL…VLAEDSEGEG (126 aa). Over residues 268 to 282 the composition is skewed to basic and acidic residues; it reads TDSHSQDLGSPERHQ. 2 disordered regions span residues 268–301 and 319–391; these read TDSH…FAND and SRVL…EGEG. A phosphoserine mark is found at Ser-272, Ser-277, and Ser-328. The residue at position 341 (Ser-341) is a Phosphoserine; by CK2. Phosphoserine occurs at positions 375 and 380. Ser-387 carries the phosphoserine; by CK2 modification.

The protein belongs to the rad9 family. As to quaternary structure, component of the toroidal 9-1-1 (RAD9-RAD1-HUS1) complex, composed of RAD9A, RAD1 and HUS1. The 9-1-1 complex associates with LIG1, POLB, FEN1, RAD17, HDAC1, RPA1 and RPA2. The 9-1-1 complex associates with the RAD17-RFC complex. RAD9A interacts with BCL2L1, FEN1, RAD9B, ABL1, RPA1, ATAD5 and RPA2. Interacts with DNAJC7. Interacts (when phosphorylated) with TOPBP1. Post-translationally, constitutively phosphorylated on serine and threonine amino acids in absence of DNA damage. Hyperphosphorylated by PRKCD and ABL1 upon DNA damage. Its phosphorylation by PRKCD may be required for the formation of the 9-1-1 complex. Phosphorylated at Ser-341 and Ser-387 by CK2, promoting interaction with TOPBP1.

The protein resides in the nucleus. The catalysed reaction is Exonucleolytic cleavage in the 3'- to 5'-direction to yield nucleoside 5'-phosphates.. Component of the 9-1-1 cell-cycle checkpoint response complex that plays a major role in DNA repair. The 9-1-1 complex is recruited to DNA lesion upon damage by the RAD17-replication factor C (RFC) clamp loader complex. Acts then as a sliding clamp platform on DNA for several proteins involved in long-patch base excision repair (LP-BER). The 9-1-1 complex stimulates DNA polymerase beta (POLB) activity by increasing its affinity for the 3'-OH end of the primer-template and stabilizes POLB to those sites where LP-BER proceeds; endonuclease FEN1 cleavage activity on substrates with double, nick, or gap flaps of distinct sequences and lengths; and DNA ligase I (LIG1) on long-patch base excision repair substrates. The 9-1-1 complex is necessary for the recruitment of RHNO1 to sites of double-stranded breaks (DSB) occurring during the S phase. RAD9A possesses 3'-&gt;5' double stranded DNA exonuclease activity. The chain is Cell cycle checkpoint control protein RAD9A (RAD9A) from Homo sapiens (Human).